The following is a 51-amino-acid chain: Insulin (51 aa).

3 disulfides stabilise this stretch: Cys-7-Cys-37, Cys-19-Cys-50, and Cys-36-Cys-41.

This sequence belongs to the insulin family. Heterodimer of a B chain and an A chain linked by two disulfide bonds.

Its subcellular location is the secreted. Its function is as follows. Insulin decreases blood glucose concentration. It increases cell permeability to monosaccharides, amino acids and fatty acids. It accelerates glycolysis, the pentose phosphate cycle, and glycogen synthesis in liver. The sequence is that of Insulin (INS) from Anser anser anser (Western greylag goose).